Here is a 285-residue protein sequence, read N- to C-terminus: Acetyl-coenzyme A carboxylase carboxyl transferase subunit beta (285 aa).

Residues Val23 to Arg285 enclose the CoA carboxyltransferase N-terminal domain. Positions 27, 30, 46, and 49 each coordinate Zn(2+). The C4-type zinc-finger motif lies at Cys27–Cys49.

The protein belongs to the AccD/PCCB family. Acetyl-CoA carboxylase is a heterohexamer composed of biotin carboxyl carrier protein (AccB), biotin carboxylase (AccC) and two subunits each of ACCase subunit alpha (AccA) and ACCase subunit beta (AccD). Zn(2+) serves as cofactor.

The protein localises to the cytoplasm. It carries out the reaction N(6)-carboxybiotinyl-L-lysyl-[protein] + acetyl-CoA = N(6)-biotinyl-L-lysyl-[protein] + malonyl-CoA. It participates in lipid metabolism; malonyl-CoA biosynthesis; malonyl-CoA from acetyl-CoA: step 1/1. Its function is as follows. Component of the acetyl coenzyme A carboxylase (ACC) complex. Biotin carboxylase (BC) catalyzes the carboxylation of biotin on its carrier protein (BCCP) and then the CO(2) group is transferred by the transcarboxylase to acetyl-CoA to form malonyl-CoA. This chain is Acetyl-coenzyme A carboxylase carboxyl transferase subunit beta, found in Sorangium cellulosum (strain So ce56) (Polyangium cellulosum (strain So ce56)).